The following is a 1196-amino-acid chain: MNQLTGQLVQYGRHRQRRSYARISEVLELPNLIEIQTSSYQWFLDEGLREMFQDISPIEDFTGNLSLEFIDYSLGDPKYPVEESKERDVTYSAPLRVKVRLINKETGEVKDQDVFMGDFPIMTDTGTFIINGAERVIVSQLVRSPSVYFSGKVDKNGKKGFTATVIPNRGAWLEYETDAKDVVYVRIDRTRKLPVTVLLRALGFGSDQEILDLIGENEYLRNTLDKDNTENSDKALLEIYERLRPGEPPTVENAKSLLDSRFFDPKRYDLANVGRYKINKKLHIKNRLFNQRLAETLVDPETGEILAEKGQILDRRTLDKVLPYLENGIGFRKLYPNGGVVEDEVMLQSIKIYAPTDAEGEQTINVIGNAYIEEAIKNITPADIISSISYFFNLLHGVGDTDDIDHLGNRRLRSVGELLQNQFRIGLSRMERVVRERMSIQDTNTITPQQLINIRPVIASIKEFFGSSQLSQFMDQTNPLAELTHKRRLSALGPGGLTRERAGMEVRDVHYSHYGRMCPIETPEGPNIGLINSLSSFAKVNRFGFIETPYRRVDPETGKVTPRIDYLTADEEDNYVVAQANAKLSDDGSFLDDSIVARFRGENTVVARNRVDYMDVSPKQVVSAATACIPFLENDDSNRALMGANMQRQAVPLMQPEAPIVGTGMEYVSGKDSGAAVICKHPGIVERVEAKNVWVRRYEEIDGQKVKGNLDKYSLLKFVRSNQGTCYNQRPIVSVGDEVVKGEILADGPSMELGELALGRNVMVGFMTWDGYNYEDAIIMSERLVKDDVYTSIHIEEYESEARDTKLGPEEITRDIPNVGEDALRNLDDRGIIRIGAEVNDGDLLVGKVTPKGVTELTAEERLLHAIFGEKAREVRDTSLRVPHGGGGIIHDVKVFNREDGDELPPGVNQLVRVYIVQKRKISEGDKMAGRHGNKGVISKILPEEDMPYLPDGTPIDIMLNPLGVPSRMNIGQVLELHMGMAARYLGIHIASPVFDGAREEDVWETLEEAGMSRDAKTVLYDGRTGEPFDNRVSVGIMYMIKLAHMVDDKLHARSTGPYSLVTQQPLGGKAQFGGQRFGEMEVWALEAYGAAYTLQEILTVKSDDVVGRVKTYEAIVKGDNVPEPGVPESFKVLIKELQSLGMDVKILSGDEEEIEMRDLEDEEDAKQADGLALSGDEAPEETASPDVERDAVTKE.

The segment covering 1152-1165 has biased composition (acidic residues); the sequence is EEEIEMRDLEDEED. A disordered region spans residues 1152–1196; it reads EEEIEMRDLEDEEDAKQADGLALSGDEAPEETASPDVERDAVTKE. The span at 1187 to 1196 shows a compositional bias: basic and acidic residues; the sequence is DVERDAVTKE.

It belongs to the RNA polymerase beta chain family. As to quaternary structure, the RNAP catalytic core consists of 2 alpha, 1 beta, 1 beta' and 1 omega subunit. When a sigma factor is associated with the core the holoenzyme is formed, which can initiate transcription.

The enzyme catalyses RNA(n) + a ribonucleoside 5'-triphosphate = RNA(n+1) + diphosphate. DNA-dependent RNA polymerase catalyzes the transcription of DNA into RNA using the four ribonucleoside triphosphates as substrates. In Bacillus velezensis (strain DSM 23117 / BGSC 10A6 / LMG 26770 / FZB42) (Bacillus amyloliquefaciens subsp. plantarum), this protein is DNA-directed RNA polymerase subunit beta.